Here is a 130-residue protein sequence, read N- to C-terminus: Small ribosomal subunit protein uS8 (130 aa).

Belongs to the universal ribosomal protein uS8 family. Part of the 30S ribosomal subunit. Contacts proteins S5 and S12.

Functionally, one of the primary rRNA binding proteins, it binds directly to 16S rRNA central domain where it helps coordinate assembly of the platform of the 30S subunit. The chain is Small ribosomal subunit protein uS8 from Mannheimia succiniciproducens (strain KCTC 0769BP / MBEL55E).